Consider the following 1132-residue polypeptide: MDPGVGNALGEGPPAPRPRRRRSLRRLLNRFLLALGSRSRSGDSPPRPPAQPSPYDGDGEGGFACAPGPAPASAGSPGPDRPPGSQPQISSGDGARPPGAQGLKNHGNTCFMNAVVQCLSNTDLLAEFLALGRYRAAPGRAEVTEQLAALVRALWTREYTPQLSAEFKNAVSKYGSQFQGNSQHDALEFLLWLLDRVHEDLEGSAHGLVSEQLPPEVSKISEDLRPSAAPTSLGPSFVQSHFQAQYRSSLTCPHCLKQSNTFDPFLCVSLPIPLRQTRFLSVTLVFPSKSQRFLRVGLAVPILSTVAALRKMVAEEGGVPAEEVILVELYPNGFQRSFFDEEDLNTIAEGDNVYAFQVPPSPGLGTLSAHPSGLSVSPRLPVRDSQRFSGPLHSENRVVFLFCNLVGSGQQASRFGPPFLIREDRTISWAQLQQCILSKVRCLMRSEVSAQDLGTLFSIRVVGLSLACSYLSPKDNRPLCHWAVDRALHLRRPGGPPHVKLAVEWDSSVTERLFGSLQEERVQDADSVWRQQQAHQQPSCTLDECFQSYTKEEQLAQDDAWKCPHCQVLQQGVVKLSLWTLPDILIIHLKRFCQVGERRNKLSTLVKFPLSGLNMAPHVARRSTNSKAGPGPWSSWKQPICLPTTYPLDFLYDLYAVCNHHGSLQGGHYTAYCRNSLDGQWYSYDDSTVEALREDEVNTRGAYILFYQKRNSIPPWSASSSMRGSTSSSLSDHWLMRLGSLNNSTRGSLLSWSSAPCPSMARVPDSPVFTNGVCHQDKGGVETRPLVRGVGGRSISMKASPASRSRHGPFKTMPLRWSFGHREKRPGASVELVEYLESRRRPRSTSQSIVPLLTRAAGGEETSASPRSDGTLPAKSEDSGRAIGQGTTGVPLSSCHLNHHPALGSLDDSLHTARTRTGNVSQDIRLPKKFDLPLTVMPSVGDEKPARPEGQKMTPWKGSSQVGSQSSPPSPSTGLLRNFKDSGPGTLPKMKSKAAMEERAPDKDRGQGTFTLLKSVFWKKEHKRTVRTESSPPAPPISLGSDRLSPAAMNEQALRIRESPAKGLGNHMERDIRSAPSSLHLPRKASRPPRASTAGTSQRTIPGEQISYGTLQRVKYHTLSLGRKKSLPESSF.

Positions 1–103 (MDPGVGNALG…GARPPGAQGL (103 aa)) are disordered. A compositionally biased stretch (basic residues) spans 17 to 28 (RPRRRRSLRRLL). 2 stretches are compositionally biased toward low complexity: residues 29-44 (NRFLLALGSRSRSGDS) and 63-78 (FACAPGPAPASAGSPG). Positions 101–710 (QGLKNHGNTC…GAYILFYQKR (610 aa)) constitute a USP domain. Catalysis depends on C110, which acts as the Nucleophile. The active-site Proton acceptor is H668. Asymmetric dimethylarginine is present on R746. Disordered stretches follow at residues 839-891 (RRRP…TGVP), 935-1008 (TVMP…RGQG), 1024-1044 (RTVRTESSPPAPPISLGSDRL), and 1057-1106 (RESP…GEQI). Basic and acidic residues predominate over residues 941–950 (GDEKPARPEG). Over residues 958-967 (GSSQVGSQSS) the composition is skewed to low complexity. At S970 the chain carries Phosphoserine. Over residues 994-1006 (AAMEERAPDKDRG) the composition is skewed to basic and acidic residues.

Belongs to the peptidase C19 family.

It carries out the reaction Thiol-dependent hydrolysis of ester, thioester, amide, peptide and isopeptide bonds formed by the C-terminal Gly of ubiquitin (a 76-residue protein attached to proteins as an intracellular targeting signal).. In terms of biological role, may recognize and hydrolyze the peptide bond at the C-terminal Gly of ubiquitin. Involved in the processing of poly-ubiquitin precursors as well as that of ubiquitinated proteins. This is Ubiquitin carboxyl-terminal hydrolase 43 (Usp43) from Mus musculus (Mouse).